The following is a 363-amino-acid chain: Probable endopolygalacturonase B (363 aa).

Positions M1–A20 are cleaved as a signal peptide. Residues V21–R28 constitute a propeptide that is removed on maturation. C31 and C46 are oxidised to a cystine. 6 PbH1 repeats span residues S158 to S187, S188 to S209, G210 to S230, V239 to T260, V268 to Q290, and T302 to G347. N162 carries N-linked (GlcNAc...) asparagine glycosylation. D202 functions as the Proton donor in the catalytic mechanism. C204 and C220 form a disulfide bridge. The active site involves H224. Disulfide bonds link C330-C335 and C354-C363.

Belongs to the glycosyl hydrolase 28 family.

The protein localises to the secreted. The enzyme catalyses (1,4-alpha-D-galacturonosyl)n+m + H2O = (1,4-alpha-D-galacturonosyl)n + (1,4-alpha-D-galacturonosyl)m.. Its function is as follows. Involved in maceration and soft-rotting of plant tissue. Hydrolyzes the 1,4-alpha glycosidic bonds of de-esterified pectate in the smooth region of the plant cell wall. This is Probable endopolygalacturonase B (pgaB) from Aspergillus flavus (strain ATCC 200026 / FGSC A1120 / IAM 13836 / NRRL 3357 / JCM 12722 / SRRC 167).